The sequence spans 425 residues: Glutamyl-tRNA reductase (425 aa).

Residues threonine 49 to arginine 52, serine 109, glutamate 114 to glutamine 116, and glutamine 120 each bind substrate. The Nucleophile role is filled by cysteine 50. Glycine 189–glycine 194 is a binding site for NADP(+).

Belongs to the glutamyl-tRNA reductase family. Homodimer.

It catalyses the reaction (S)-4-amino-5-oxopentanoate + tRNA(Glu) + NADP(+) = L-glutamyl-tRNA(Glu) + NADPH + H(+). It participates in porphyrin-containing compound metabolism; protoporphyrin-IX biosynthesis; 5-aminolevulinate from L-glutamyl-tRNA(Glu): step 1/2. Its pathway is porphyrin-containing compound metabolism; chlorophyll biosynthesis. Functionally, catalyzes the NADPH-dependent reduction of glutamyl-tRNA(Glu) to glutamate 1-semialdehyde (GSA). The chain is Glutamyl-tRNA reductase from Chlorobium phaeovibrioides (strain DSM 265 / 1930) (Prosthecochloris vibrioformis (strain DSM 265)).